We begin with the raw amino-acid sequence, 364 residues long: UDP-N-acetylglucosamine--N-acetylmuramyl-(pentapeptide) pyrophosphoryl-undecaprenol N-acetylglucosamine transferase (364 aa).

UDP-N-acetyl-alpha-D-glucosamine contacts are provided by residues 10 to 12 (TGG), Asn-124, Arg-166, Ser-196, Ile-252, and Gln-297.

It belongs to the glycosyltransferase 28 family. MurG subfamily.

It localises to the cell membrane. It catalyses the reaction di-trans,octa-cis-undecaprenyl diphospho-N-acetyl-alpha-D-muramoyl-L-alanyl-D-glutamyl-meso-2,6-diaminopimeloyl-D-alanyl-D-alanine + UDP-N-acetyl-alpha-D-glucosamine = di-trans,octa-cis-undecaprenyl diphospho-[N-acetyl-alpha-D-glucosaminyl-(1-&gt;4)]-N-acetyl-alpha-D-muramoyl-L-alanyl-D-glutamyl-meso-2,6-diaminopimeloyl-D-alanyl-D-alanine + UDP + H(+). It functions in the pathway cell wall biogenesis; peptidoglycan biosynthesis. Its function is as follows. Cell wall formation. Catalyzes the transfer of a GlcNAc subunit on undecaprenyl-pyrophosphoryl-MurNAc-pentapeptide (lipid intermediate I) to form undecaprenyl-pyrophosphoryl-MurNAc-(pentapeptide)GlcNAc (lipid intermediate II). This is UDP-N-acetylglucosamine--N-acetylmuramyl-(pentapeptide) pyrophosphoryl-undecaprenol N-acetylglucosamine transferase from Ruminiclostridium cellulolyticum (strain ATCC 35319 / DSM 5812 / JCM 6584 / H10) (Clostridium cellulolyticum).